A 113-amino-acid polypeptide reads, in one-letter code: Flagellar transcriptional regulator FlhD (113 aa).

Belongs to the FlhD family. In terms of assembly, homodimer; disulfide-linked. Forms a heterohexamer composed of two FlhC and four FlhD subunits. Each FlhC binds a FlhD dimer, forming a heterotrimer, and a hexamer assembles by dimerization of two heterotrimers.

The protein localises to the cytoplasm. Functionally, functions in complex with FlhC as a master transcriptional regulator that regulates transcription of several flagellar and non-flagellar operons by binding to their promoter region. Activates expression of class 2 flagellar genes, including fliA, which is a flagellum-specific sigma factor that turns on the class 3 genes. Also regulates genes whose products function in a variety of physiological pathways. The chain is Flagellar transcriptional regulator FlhD from Salmonella typhi.